The primary structure comprises 229 residues: Endo-1,4-beta-xylanase 1 (229 aa).

A signal peptide spans 1-19 (MVAFSSLICALTSIASTLA). The propeptide occupies 20–51 (MPTGLEPESSVNVTERGMYDFVLGAHNDHRRR). The N-linked (GlcNAc...) asparagine glycan is linked to Asn31. The region spanning 42 to 228 (LGAHNDHRRR…GSGSASQSVS (187 aa)) is the GH11 domain. Tyr117 contributes to the substrate binding site. Glu126 acts as the Nucleophile in catalysis. Positions 128, 160, 164, 174, and 209 each coordinate substrate. Glu215 acts as the Proton donor in catalysis.

Belongs to the glycosyl hydrolase 11 (cellulase G) family.

The protein localises to the secreted. The catalysed reaction is Endohydrolysis of (1-&gt;4)-beta-D-xylosidic linkages in xylans.. It participates in glycan degradation; xylan degradation. Its function is as follows. Glycoside hydrolase involved in the hydrolysis of xylan, a major plant cell wall hemicellulose made up of 1,4-beta-linked D-xylopyranose residues. Catalyzes the endohydrolysis of the main-chain 1,4-beta-glycosidic bonds connecting the xylose subunits yielding various xylooligosaccharides and xylose. This is Endo-1,4-beta-xylanase 1 from Hypocrea jecorina (strain QM6a) (Trichoderma reesei).